Here is a 776-residue protein sequence, read N- to C-terminus: Palmitoyltransferase AKR1 (776 aa).

At 1–311 (MDQEMTTVAS…MEGKLGPRNT (311 aa)) the chain is on the cytoplasmic side. The interval 38–58 (RLDEGSSIRGGELERDSQEVG) is disordered. ANK repeat units lie at residues 68 to 97 (CHDL…SLNL), 103 to 132 (QDVT…DIDA), 137 to 166 (LKAT…DPNI), 170 to 199 (QGFN…AIDE), 203 to 232 (DGHT…SVNS), and 236 to 265 (AGMT…SLDA). A helical transmembrane segment spans residues 312 to 332 (ILAIFLLPIAVLWLIFSTFKW). The Lumenal segment spans residues 333–336 (LPVY). A helical membrane pass occupies residues 337 to 357 (VGVPFAIAEFMGMQYTVVLVL). The Cytoplasmic portion of the chain corresponds to 358-368 (LGHIKAQDKVS). The chain crosses the membrane as a helical span at residues 369–389 (TSNYFASIITASLIWVGYCWI). At 390 to 402 (SRFAVNTPGYAFS) the chain is on the lumenal side. The chain crosses the membrane as a helical span at residues 403–423 (NLGFIIMFVGCCWTFWTAIVT). The Cytoplasmic segment spans residues 424–498 (DPGFVPKGQQ…NCVGAKNHRS (75 aa)). Residues 454 to 504 (NFCIVCMARKPLRSKHCRTCNRCVARFDHHCPWIWNCVGAKNHRSFLLFVL) form the DHHC domain. The S-palmitoyl cysteine intermediate role is filled by C484. Residues 499–519 (FLLFVLFLIGGIILFIRLTIA) traverse the membrane as a helical segment. Topologically, residues 520-553 (YIQQNAPEYIPTPNPGLTTCDISTTLCQAGDFDP) are lumenal. Residues 554–574 (FLLCMALWSTLQLTWTSVLAI) form a helical membrane-spanning segment. The Cytoplasmic portion of the chain corresponds to 575 to 776 (SHLWQVSRQM…RYEVVSEQEV (202 aa)). The interval 628-665 (GAGEEAAGPPGAEAGPEGNALLPPPGGHVHGPQCRHGD) is disordered. Residues 629–645 (AGEEAAGPPGAEAGPEG) are compositionally biased toward low complexity.

It belongs to the DHHC palmitoyltransferase family. AKR/ZDHHC17 subfamily.

The protein resides in the early endosome membrane. It is found in the golgi apparatus membrane. It catalyses the reaction L-cysteinyl-[protein] + hexadecanoyl-CoA = S-hexadecanoyl-L-cysteinyl-[protein] + CoA. Functionally, palmitoyltransferase specific for casein kinase 1. The sequence is that of Palmitoyltransferase AKR1 (AKR1) from Cryptococcus neoformans var. neoformans serotype D (strain B-3501A) (Filobasidiella neoformans).